We begin with the raw amino-acid sequence, 494 residues long: Rho GTPase-activating protein 19 (494 aa).

At alanine 2 the chain carries N-acetylalanine. Phosphoserine is present on residues serine 7 and serine 31. Residues 102–308 enclose the Rho-GAP domain; the sequence is MSLKRKEKGV…FMIKHSQKLF (207 aa). Disordered stretches follow at residues 349–368 and 399–421; these read KSQKRNRVDSCPHQEETQHH and QSLTQTPGREPSTSQVQKRARSR. A compositionally biased stretch (basic and acidic residues) spans 354-368; the sequence is NRVDSCPHQEETQHH. Polar residues predominate over residues 399–415; the sequence is QSLTQTPGREPSTSQVQ. Residues serine 422, serine 438, and serine 470 each carry the phosphoserine modification. Position 478 is a phosphothreonine (threonine 478).

Strong expression in fetal heart, brain, placenta, lung, liver, skeletal muscle, kidney and pancreas. Weak expression in adult pancreas, spleen, thymus, and ovary.

The protein localises to the nucleus. GTPase activator for the Rho-type GTPases by converting them to an inactive GDP-bound state. In Homo sapiens (Human), this protein is Rho GTPase-activating protein 19 (ARHGAP19).